Here is a 631-residue protein sequence, read N- to C-terminus: MSTTTLTRREQRAKAQHFIDTLEGTAFPNSKRIYVTGSQHDIRVPMREIQLSPTLISGTKDHPQYEENEAIPVYDTSGPYGDPNIAINIQQGLAKLRQPWIEARADVETLSNRSSAYTRERLTDEGLNALRFTGLLTPKRAKAGHCVTQLHYARNGIVTPEMAFIAIRENMGRERIRSEVLRHQHPGENFGARLPENITPEFVRDEVAAGRAIIPANINHPESEPMIIGRNFLVKVNANIGNSAVTSSIEEEVEKLVWATRWGADTVMDLSTGRYIHETREWILRNSPVPIGTVPIYQALEKVNGIAEDLTWEAFRDTLLEQAEQGVDYFTIHAGVLLRYVPMTAKRLTGIVSRGGSIMAKWCLSHHKENFLFEHFREICEICAAYDVSLSLGDGLRPGSIQDANDDAQFAELHTLGELTKIAWEYDVQVMIEGPGHVPMQMIRRNMTEELEHCHEAPFYTLGPLTTDIAPGYDHFTSGIGAAMIGWFGCAMLCYVTPKEHLGLPNKEDVKQGLITYKIAAHAADLAKGHPGAQIRDNAMSKARFEFRWEDQFNLALDPFTARAWHDETLPHESGKVAHFCSMCGPKFCSMKISQEVRDYAAAQTIEVGMANMSESFRAKGGEIYLKREEA.

Substrate is bound by residues N239, M268, Y297, H333, 353–355 (SRG), 394–397 (DGLR), and E433. Residue H437 participates in Zn(2+) binding. Substrate is bound at residue Y460. H501 contacts Zn(2+). Positions 581, 584, and 589 each coordinate [4Fe-4S] cluster.

It belongs to the ThiC family. In terms of assembly, homodimer. The cofactor is [4Fe-4S] cluster.

The enzyme catalyses 5-amino-1-(5-phospho-beta-D-ribosyl)imidazole + S-adenosyl-L-methionine = 4-amino-2-methyl-5-(phosphooxymethyl)pyrimidine + CO + 5'-deoxyadenosine + formate + L-methionine + 3 H(+). It functions in the pathway cofactor biosynthesis; thiamine diphosphate biosynthesis. Its function is as follows. Catalyzes the synthesis of the hydroxymethylpyrimidine phosphate (HMP-P) moiety of thiamine from aminoimidazole ribotide (AIR) in a radical S-adenosyl-L-methionine (SAM)-dependent reaction. This chain is Phosphomethylpyrimidine synthase, found in Salmonella arizonae (strain ATCC BAA-731 / CDC346-86 / RSK2980).